We begin with the raw amino-acid sequence, 519 residues long: Light-independent protochlorophyllide reductase subunit B (519 aa).

[4Fe-4S] cluster is bound at residue aspartate 36. Aspartate 274 (proton donor) is an active-site residue. Residue 409–410 participates in substrate binding; sequence GL. The tract at residues 426 to 465 is disordered; the sequence is DEAGPSHHGGHSPKPSEAARTPDKVEERADPAPEAPQTGS. Residues 445–456 show a composition bias toward basic and acidic residues; it reads RTPDKVEERADP.

This sequence belongs to the ChlB/BchB/BchZ family. Protochlorophyllide reductase is composed of three subunits; BchL, BchN and BchB. Forms a heterotetramer of two BchB and two BchN subunits. The cofactor is [4Fe-4S] cluster.

The catalysed reaction is chlorophyllide a + oxidized 2[4Fe-4S]-[ferredoxin] + 2 ADP + 2 phosphate = protochlorophyllide a + reduced 2[4Fe-4S]-[ferredoxin] + 2 ATP + 2 H2O. Its pathway is porphyrin-containing compound metabolism; bacteriochlorophyll biosynthesis (light-independent). In terms of biological role, component of the dark-operative protochlorophyllide reductase (DPOR) that uses Mg-ATP and reduced ferredoxin to reduce ring D of protochlorophyllide (Pchlide) to form chlorophyllide a (Chlide). This reaction is light-independent. The NB-protein (BchN-BchB) is the catalytic component of the complex. In Jannaschia sp. (strain CCS1), this protein is Light-independent protochlorophyllide reductase subunit B.